Here is a 398-residue protein sequence, read N- to C-terminus: Immunoglobulin heavy constant alpha 1 (398 aa).

Topologically, residues 1–364 (ASPTSPKVFP…TPGANLWPTT (364 aa)) are extracellular. Residues 6–98 (PKVFPLSLCS…HYTNPSQDVT (93 aa)) enclose the Ig-like 1 domain. Disulfide bonds link C26–C85 and C77–C101. A disordered region spans residues 96-122 (DVTVPCPVPSTPPTPSPSTPPTPSPSC). Over residues 101-119 (CPVPSTPPTPSPSTPPTPS) the composition is skewed to pro residues. S105 carries O-linked (GalNAc...) serine glycosylation. O-linked (GalNAc...) threonine glycosylation is found at T106 and T109. Residues S111 and S113 are each glycosylated (O-linked (GalNAc...) serine). T114 and T117 each carry an O-linked (GalNAc...) threonine glycan. S119 and S121 each carry an O-linked (GalNAc...) serine glycan. 3 disulfides stabilise this stretch: C123–C180, C147–C204, and C250–C313. Ig-like domains follow at residues 125–220 (PRLS…ATLS) and 228–330 (PEVH…KTID). Residue N144 is glycosylated (N-linked (GlcNAc...) (complex) asparagine). N-linked (GlcNAc...) (complex) asparagine glycosylation is present at P340. E352 contacts 3-hydroxy-L-kynurenine. The helical transmembrane segment at 365–383 (ITFLTLFLLSLFYSTALTV) threads the bilayer. The Cytoplasmic portion of the chain corresponds to 384 to 398 (TSVRGPSGNREGPQY).

Immunoglobulins are composed of two identical heavy chains and two identical light chains; disulfide-linked. Monomeric or polymeric. Part of the secretory IgA (sIgA) complex that consists of two, four or five IgA monomers, and two additional non-Ig polypeptides, namely the JCHAIN and the secretory component (the proteolytic product of PIGR). In terms of processing, 3-Hydroxykynurenine, an oxidized tryptophan metabolite that is common in biological fluids, reacts with alpha-1-microglobulin to form heterogeneous polycyclic chromophores including hydroxanthommatin. The chromophore reacts with accessible cysteines forming non-reducible thioether cross-links with Ig alpha-1 chain C region Cys-352. Post-translationally, N- and O-glycosylated. N-glycan at Asn-144: Hex5HexNAc4.

The protein resides in the secreted. Its subcellular location is the cell membrane. Constant region of immunoglobulin heavy chains. Immunoglobulins, also known as antibodies, are membrane-bound or secreted glycoproteins produced by B lymphocytes. In the recognition phase of humoral immunity, the membrane-bound immunoglobulins serve as receptors which, upon binding of a specific antigen, trigger the clonal expansion and differentiation of B lymphocytes into immunoglobulins-secreting plasma cells. Secreted immunoglobulins mediate the effector phase of humoral immunity, which results in the elimination of bound antigens. The antigen binding site is formed by the variable domain of one heavy chain, together with that of its associated light chain. Thus, each immunoglobulin has two antigen binding sites with remarkable affinity for a particular antigen. The variable domains are assembled by a process called V-(D)-J rearrangement and can then be subjected to somatic hypermutations which, after exposure to antigen and selection, allow affinity maturation for a particular antigen. Ig alpha is the major immunoglobulin class in body secretions. The chain is Immunoglobulin heavy constant alpha 1 from Homo sapiens (Human).